Reading from the N-terminus, the 405-residue chain is Tryptophan synthase beta chain (405 aa).

Position 98 is an N6-(pyridoxal phosphate)lysine (K98).

The protein belongs to the TrpB family. In terms of assembly, tetramer of two alpha and two beta chains. Pyridoxal 5'-phosphate serves as cofactor.

The catalysed reaction is (1S,2R)-1-C-(indol-3-yl)glycerol 3-phosphate + L-serine = D-glyceraldehyde 3-phosphate + L-tryptophan + H2O. It participates in amino-acid biosynthesis; L-tryptophan biosynthesis; L-tryptophan from chorismate: step 5/5. The beta subunit is responsible for the synthesis of L-tryptophan from indole and L-serine. The polypeptide is Tryptophan synthase beta chain (Methylococcus capsulatus (strain ATCC 33009 / NCIMB 11132 / Bath)).